The following is a 55-amino-acid chain: Large ribosomal subunit protein bL33 (55 aa).

This sequence belongs to the bacterial ribosomal protein bL33 family.

The protein is Large ribosomal subunit protein bL33 of Wigglesworthia glossinidia brevipalpis.